Consider the following 122-residue polypeptide: Putative cryptic phosphonate transport system permease protein PhnE2 (122 aa).

In terms of domain architecture, ABC transmembrane type-1 spans 1 to 114; the sequence is MLALFIHTTG…VTVSLLDFLS (114 aa). Transmembrane regions (helical) follow at residues 3–23, 39–59, 68–88, and 93–113; these read ALFI…VEAI, LEEI…SYSL, SATV…WEAI, and FQQT…LDFL.

The protein belongs to the binding-protein-dependent transport system permease family. In terms of assembly, if the reading frame is restored, the complex is composed of two ATP-binding proteins (PhnC), two transmembrane proteins (PhnE) and a solute-binding protein (PhnD).

The protein resides in the cell inner membrane. C-terminal fragment of the PhnE protein, part of a phosphonate usage operon that is cryptic in K12 strains. Growth of K12 strains on phosphonate can be observed when it is used as the sole phosphorus source after a 60 hour lag period, suggesting the operon is activated. An intact PhnE in strain B is (AC A0A140NFA3). Part of the binding-protein-dependent transport system for phosphonates; probably responsible for the translocation of the substrate across the membrane. This chain is Putative cryptic phosphonate transport system permease protein PhnE2 (phnE), found in Escherichia coli (strain K12).